Reading from the N-terminus, the 149-residue chain is Deoxyuridine 5'-triphosphate nucleotidohydrolase (149 aa).

Residues 68-70 (RSG), Asn81, 85-87 (LID), and Met95 each bind substrate.

Belongs to the dUTPase family. Mg(2+) is required as a cofactor.

It carries out the reaction dUTP + H2O = dUMP + diphosphate + H(+). It functions in the pathway pyrimidine metabolism; dUMP biosynthesis; dUMP from dCTP (dUTP route): step 2/2. Functionally, this enzyme is involved in nucleotide metabolism: it produces dUMP, the immediate precursor of thymidine nucleotides and it decreases the intracellular concentration of dUTP so that uracil cannot be incorporated into DNA. In Methylibium petroleiphilum (strain ATCC BAA-1232 / LMG 22953 / PM1), this protein is Deoxyuridine 5'-triphosphate nucleotidohydrolase.